Here is a 493-residue protein sequence, read N- to C-terminus: Neuronal pentraxin receptor (493 aa).

Residues 1–2 (MK) are Cytoplasmic-facing. A helical; Signal-anchor for type II membrane protein transmembrane segment spans residues 3–23 (FLAVLLAAGMLAFLGAVICII). Residues 24-493 (ASVPLAASPA…FDVCKGRAKA (470 aa)) lie on the Extracellular side of the membrane. The tract at residues 37–72 (PGGTDNASAASAAGGSGPQRSLSALHSAGGSAGPSV) is disordered. A glycan (N-linked (GlcNAc...) asparagine) is linked at Asn42. Low complexity predominate over residues 57–72 (SLSALHSAGGSAGPSV). N-linked (GlcNAc...) asparagine glycosylation occurs at Asn211. Positions 285–487 (DAFKVSIPIR…GAKKAAFDVC (203 aa)) constitute a Pentraxin (PTX) domain. Cys315 and Cys376 are joined by a disulfide. Asn340, Glu418, Gln419, Asp420, and Gln430 together coordinate Ca(2+). The N-linked (GlcNAc...) asparagine glycan is linked to Asn456.

As to quaternary structure, heteropentamer with NPTX1 and/or NPTX2. Also binds taipoxin-associated calcium-binding protein 49 (TCBP49/RCN2). Interacts with KLHL2. It depends on Ca(2+) as a cofactor. In terms of processing, ubiquitinated by a cullin-RING-based BCR (BTB-CUL3-RBX1) E3 ubiquitin-protein ligase complex containing KLHL2.

The protein localises to the membrane. May be involved in mediating uptake of synaptic material during synapse remodeling or in mediating the synaptic clustering of AMPA glutamate receptors at a subset of excitatory synapses. This chain is Neuronal pentraxin receptor (Nptxr), found in Mus musculus (Mouse).